Reading from the N-terminus, the 700-residue chain is Calpain-2 catalytic subunit (700 aa).

Residues 2–19 constitute a propeptide, anchors to the small subunit; it reads AGMAAALAKERAAAAGAG. In terms of domain architecture, Calpain catalytic spans 45–344; it reads LFHDPSFPAG…YSRLEICNLT (300 aa). Residues G91 and D96 each contribute to the Ca(2+) site. Residue C105 is part of the active site. E175, Q229, and K230 together coordinate Ca(2+). Catalysis depends on residues H262 and N286. 3 residues coordinate Ca(2+): E292, D299, and E323. A domain III region spans residues 345 to 514; the sequence is PDTLASDRYK…KNANSTVIDD (170 aa). Residues 515–529 are linker; the sequence is EIEANFEETEIDEDD. The tract at residues 530–700 is domain IV; that stretch reads IEPSFKKLFG…LINWLFFTVI (171 aa). A542, D545, E547, E552, D585, D587, S589, K591, E596, D615, D617, S619, T621, E626, D658, and N661 together coordinate Ca(2+). 2 consecutive EF-hand domains span residues 572 to 605 and 602 to 637; these read FSIE…TKIQ and TKIQ…AGFK. Positions 667-700 constitute an EF-hand 3 domain; the sequence is IRLETLYKMFRKLDTEKTGTIELNLINWLFFTVI.

It belongs to the peptidase C2 family. In terms of assembly, forms a heterodimer with a small (regulatory) subunit (CAPNS1). Ca(2+) is required as a cofactor. Ubiquitous.

The protein resides in the cytoplasm. The protein localises to the cell membrane. The enzyme catalyses Broad endopeptidase specificity.. With respect to regulation, activated by 200-1000 micromolar concentrations of calcium and inhibited by calpastatin. Functionally, calcium-regulated non-lysosomal thiol-protease which catalyze limited proteolysis of substrates involved in cytoskeletal remodeling and signal transduction. This chain is Calpain-2 catalytic subunit (CAPN2), found in Gallus gallus (Chicken).